The sequence spans 774 residues: MLKLFSAFRKNKIWDFNGGIHPPEMKTQSNGTPLRQVPLAQRFVIPLKQHIGAEGELCVSVGDNVLRGQPLTRGRGKMLPVHAPTSGTVTAIAPHSTAHPSALAELSVIIDADGEDCWIPRDGWADYRSRSREELIERIHQFGVAGLGGAGFPTGVKLQGGGDKIETLIINAAECEPYITADDRLMQDCAAQVVEGIRILAHILQPREILIGIEDNKPQAISMLRAVLADSHDISLRVIPTKYPSGGAKQLTYILTGKQVPHGGRSSDIGVLMQNVGTAYAVKRAVIDGEPITERVVTLTGEAIARPGNVWARLGTPVRHLLNDAGFCPSADQMVIMGGPLMGFTLPWLDVPVVKITNCLLAPSANELGEPQEEQSCIRCSACADACPADLLPQQLYWFSKGQQHDKATTHNIADCIECGACAWVCPSNIPLVQYFRQEKAEIAAIRQEEKRAAEAKARFEARQARLEREKAARLERHKSAAVQPAAKDKDAIAAALARVKEKQAQATQPIVIKAGERPDNSAIIAAREARKAQARAKQAELQQTNDAATVADPRKTAVEAAIARAKARKLEQQQANAEPEQQVDPRKAAVEAAIARAKARKLEQQQANAEPEEQVDPRKAAVEAAIARAKARKLEQQQANAEPEEQIDPRKAAVEAAIARAKARKLEQQQQANAEPEEQVDPRKAAVEAAIARAKARKLEQQQQANAEPEEQVDPRKAAVEAAIARAKARKLEQQQANAEPEEQIDPRKAAVAAAIARAQAKKAAQQKVVNED.

4Fe-4S ferredoxin-type domains follow at residues glycine 369–tyrosine 397 and lysine 407–phenylalanine 436. 8 residues coordinate [4Fe-4S] cluster: cysteine 377, cysteine 380, cysteine 383, cysteine 387, cysteine 416, cysteine 419, cysteine 422, and cysteine 426. Positions lysine 602–lysine 750 are disordered.

Belongs to the 4Fe4S bacterial-type ferredoxin family. RnfC subfamily. The complex is composed of six subunits: RsxA, RsxB, RsxC, RsxD, RsxE and RsxG. The cofactor is [4Fe-4S] cluster.

The protein resides in the cell inner membrane. Part of a membrane-bound complex that couples electron transfer with translocation of ions across the membrane. Required to maintain the reduced state of SoxR. This chain is Ion-translocating oxidoreductase complex subunit C, found in Escherichia coli O6:K15:H31 (strain 536 / UPEC).